Consider the following 717-residue polypeptide: RNA helicase NPH-II (717 aa).

The Helicase ATP-binding domain maps to 193-384 (FEIFISKKNC…IYFKNIVEIY (192 aa)). Residue 206–213 (GGTGIGKT) coordinates ATP. Residues 331 to 334 (DEIH) carry the DEXH box motif. The region spanning 406 to 566 (ILKNYMPSVG…VFKYNNMDYY (161 aa)) is the Helicase C-terminal domain.

It belongs to the DEAD box helicase family. DEAH subfamily. As to quaternary structure, monomer.

The protein localises to the virion. The enzyme catalyses ATP + H2O = ADP + phosphate + H(+). Functionally, NTP-dependent helicase that catalyzes unidirectional unwinding of 3'tailed duplex RNAs and plays an important role during transcription of early mRNAs, presumably by preventing R-loop formation behind the elongating RNA polymerase. Might also play a role in the export of newly synthesized mRNA chains out of the core into the cytoplasm. Required for replication and propagation of viral particles. This chain is RNA helicase NPH-II (NPH2), found in Melanoplus sanguinipes (Migratory grasshopper).